Consider the following 134-residue polypeptide: Cytochrome b (134 aa).

3 consecutive transmembrane segments (helical) span residues 33 to 53, 77 to 98, and 113 to 133; these read FGSLLGVCLIIQILTGLFLAM, WLIRYLHANGASMFFICLFLHV, and WNIGVLLLFAVMATAFMGYVL. Residues histidine 83 and histidine 97 each contribute to the heme b site.

It belongs to the cytochrome b family. The cytochrome bc1 complex contains 11 subunits: 3 respiratory subunits (MT-CYB, CYC1 and UQCRFS1), 2 core proteins (UQCRC1 and UQCRC2) and 6 low-molecular weight proteins (UQCRH/QCR6, UQCRB/QCR7, UQCRQ/QCR8, UQCR10/QCR9, UQCR11/QCR10 and a cleavage product of UQCRFS1). This cytochrome bc1 complex then forms a dimer. The cofactor is heme b.

The protein localises to the mitochondrion inner membrane. Component of the ubiquinol-cytochrome c reductase complex (complex III or cytochrome b-c1 complex) that is part of the mitochondrial respiratory chain. The b-c1 complex mediates electron transfer from ubiquinol to cytochrome c. Contributes to the generation of a proton gradient across the mitochondrial membrane that is then used for ATP synthesis. The chain is Cytochrome b (MT-CYB) from Sorex shinto sadonis (Sado shrew).